Reading from the N-terminus, the 310-residue chain is Glutaminase (310 aa).

The substrate site is built by Ser67, Asn118, Glu161, Asn168, Tyr192, Tyr244, and Val262.

This sequence belongs to the glutaminase family. As to quaternary structure, homotetramer.

The enzyme catalyses L-glutamine + H2O = L-glutamate + NH4(+). This is Glutaminase from Legionella pneumophila (strain Lens).